The following is a 362-amino-acid chain: Terpene synthase 3 (362 aa).

A DDxx(x)D/E motif motif is present at residues 90–95 (DDFLER). The NDxxSxxxD/E motif motif lies at 239 to 247 (NDCVSYAKE).

Belongs to the terpene synthase family.

It catalyses the reaction (2E,6E)-farnesyl diphosphate = beta-maaliene + diphosphate. The enzyme catalyses (2E,6E)-farnesyl diphosphate = aristolene + diphosphate. The catalysed reaction is (2E,6E)-farnesyl diphosphate = calarene + diphosphate. It carries out the reaction (2E)-geranyl diphosphate = (E)-beta-ocimene + diphosphate. It catalyses the reaction (2E)-geranyl diphosphate = (Z)-beta-ocimene + diphosphate. The enzyme catalyses (2E)-geranyl diphosphate + H2O = linalool + diphosphate. The catalysed reaction is (2E)-geranyl diphosphate = beta-myrcene + diphosphate. Terpene synthase that converts its substrate farnesyl diphosphate (FPP) into an unidentified sesquiterpene as a major product, as well as beta-maaliene, aristolene, calarene and 2 additional unidentified sesquiterpene as minor products. Is also able to convert geranyl diphosphate (GPP) into a mixture of monoterpenes including (Z)-beta-ocimene, (E)-beta-ocimene, allo-ocimene, linalool and beta-myrcene. The sequence is that of Terpene synthase 3 from Dictyostelium discoideum (Social amoeba).